The sequence spans 407 residues: MKRVVITGLGIISSIGNNKIEVLTSLLETKSGISFSKEMERSGMRSHVWGNIKLDNYQENIDRKIFRFMNDASIYSYLSMKQAIEDAKLTSKMYQNNPRVGVIIGSSSGSPRCQINGVSIIKKTKRLKSVSPYTVIKSMTSSISACLSTLFKIQGVNYSISSACATSAHCIGNAMELIQLGKQDLIFAGGGEELSWELACAFDSMGALSTMYNSQPILSSRVFDYYRDGFVISGGAGILVVEELNYALSRSAHIYAEIVGYGTSSDGYNVVVPSGNGAMRCMNIAMSNIQEPIDYLNVHSTSTKIGDLIELNAIQQVFRKTSIPILSSTKSITGHSLGASGVQEMIYSLLMLKYNFIVPSINIFKLDPKAKNCNILTTMMRKELSIIMSNSFGFGGTNVSLIIKKFV.

One can recognise a Ketosynthase family 3 (KS3) domain in the interval 1-405 (MKRVVITGLG…GTNVSLIIKK (405 aa)). Residues Cys164, His299, and His335 each act as for beta-ketoacyl synthase activity in the active site.

The protein belongs to the thiolase-like superfamily. Beta-ketoacyl-ACP synthases family. Homodimer.

The protein localises to the cytoplasm. The enzyme catalyses a fatty acyl-[ACP] + malonyl-[ACP] + H(+) = a 3-oxoacyl-[ACP] + holo-[ACP] + CO2. It carries out the reaction (3Z)-decenoyl-[ACP] + malonyl-[ACP] + H(+) = 3-oxo-(5Z)-dodecenoyl-[ACP] + holo-[ACP] + CO2. The protein operates within lipid metabolism; fatty acid biosynthesis. Its function is as follows. Involved in the type II fatty acid elongation cycle. Catalyzes the elongation of a wide range of acyl-ACP by the addition of two carbons from malonyl-ACP to an acyl acceptor. Can also use unsaturated fatty acids. Catalyzes a key reaction in unsaturated fatty acid (UFA) synthesis, the elongation of the cis-3-decenoyl-ACP produced by FabA. This chain is 3-oxoacyl-[acyl-carrier-protein] synthase 1 (fabB), found in Buchnera aphidicola subsp. Baizongia pistaciae (strain Bp).